Consider the following 114-residue polypeptide: Iron-sulfur cluster insertion protein ErpA (114 aa).

Residues Cys-42, Cys-106, and Cys-108 each contribute to the iron-sulfur cluster site.

This sequence belongs to the HesB/IscA family. As to quaternary structure, homodimer. The cofactor is iron-sulfur cluster.

Functionally, required for insertion of 4Fe-4S clusters for at least IspG. The polypeptide is Iron-sulfur cluster insertion protein ErpA (Pasteurella multocida (strain Pm70)).